We begin with the raw amino-acid sequence, 689 residues long: Putative ATP-dependent helicase IRC3 (689 aa).

Residues 46–211 (NSIRQGTKRI…SMVMDKIVYH (166 aa)) enclose the Helicase ATP-binding domain. ATP is bound at residue 59–66 (LATGGGKT). The DEAH box signature appears at 158 to 161 (DEAH). The Helicase C-terminal domain maps to 265–438 (ILKTYLHKKQ…KIDERLRALF (174 aa)).

It belongs to the helicase family. IRC3 subfamily.

The protein resides in the mitochondrion. The sequence is that of Putative ATP-dependent helicase IRC3 (IRC3) from Saccharomyces cerevisiae (strain ATCC 204508 / S288c) (Baker's yeast).